A 289-amino-acid polypeptide reads, in one-letter code: Oxaloacetate decarboxylase 1 (289 aa).

Ser50 lines the substrate pocket. A Mg(2+)-binding site is contributed by Asp88. Substrate-binding residues include Arg159 and His235.

Belongs to the isocitrate lyase/PEP mutase superfamily. Oxaloacetate decarboxylase family. In terms of assembly, homotetramer; dimer of dimers. Mg(2+) serves as cofactor.

The catalysed reaction is oxaloacetate + H(+) = pyruvate + CO2. In terms of biological role, catalyzes the decarboxylation of oxaloacetate into pyruvate. Seems to play a role in maintaining cellular concentrations of bicarbonate and pyruvate. The sequence is that of Oxaloacetate decarboxylase 1 from Pseudomonas fluorescens (strain Pf0-1).